We begin with the raw amino-acid sequence, 1176 residues long: Pesticidal crystal protein Cry1Ag (1176 aa).

It belongs to the delta endotoxin family.

Its function is as follows. Promotes colloidosmotic lysis by binding to the midgut epithelial cells of many lepidopteran larvae. The polypeptide is Pesticidal crystal protein Cry1Ag (cry1Ag) (Bacillus thuringiensis).